The sequence spans 207 residues: Large ribosomal subunit protein uL4 (207 aa).

A disordered region spans residues 50–75 (KTKTRSEVAGSGKKPFKQKGTGNARQ).

This sequence belongs to the universal ribosomal protein uL4 family. Part of the 50S ribosomal subunit.

One of the primary rRNA binding proteins, this protein initially binds near the 5'-end of the 23S rRNA. It is important during the early stages of 50S assembly. It makes multiple contacts with different domains of the 23S rRNA in the assembled 50S subunit and ribosome. Its function is as follows. Forms part of the polypeptide exit tunnel. This Pelobacter propionicus (strain DSM 2379 / NBRC 103807 / OttBd1) protein is Large ribosomal subunit protein uL4.